The sequence spans 466 residues: MFRNTLRTFPRPATPSLPTSSHSPIARASLSKSPLFVLSLVLVCIFFLSFLSHPDPSARKLQWPGLFPSPSPSVIHTKDLFLERALNATSEAFREICPSAGDPVHLDPDLTEAQKKRYLPLKRSKRGRYLLVTNTRQIEAHLPDLLNTLIVLLRYLAPEHLAVSILEGPSSDCTQKAIEQVLKPMLDDQGLESAWTRIETGESKIDWGKHNRIEKIAELRNTALAPLWQGEGDQKWEDEIEAVVFFNDVYLHAADILELVYQHVKNGAGITTAMDWWKKRPEYYYDVWVGRTIDTGDLFYPIDNPWWSPSSDLFPNSPNSRNAYSRLEPFQVFSSWNALAVLSPKPFLPPHNVRFRRGDVEKGECAASECTLIATDFWKAGFGKVAVVPSVQLAYERDVAKDIIEDVGKQKEQLGWIDGVPPEHLDDKIEWSTKPPKKVRCHPWPEVNGLSANVWEETRWVQPWLE.

The disordered stretch occupies residues 1–23 (MFRNTLRTFPRPATPSLPTSSHS). The Cytoplasmic portion of the chain corresponds to 1–33 (MFRNTLRTFPRPATPSLPTSSHSPIARASLSKS). The chain crosses the membrane as a helical; Signal-anchor for type II membrane protein span at residues 34-54 (PLFVLSLVLVCIFFLSFLSHP). The Lumenal portion of the chain corresponds to 55 to 466 (DPSARKLQWP…ETRWVQPWLE (412 aa)).

Mg(2+) is required as a cofactor. The cofactor is Mn(2+). It depends on Co(2+) as a cofactor.

It localises to the golgi apparatus membrane. It functions in the pathway protein modification; protein glycosylation. In terms of biological role, responsible for addition of mannose residues in an alpha-1,3 linkage to a polymannosly precursor. May be involved in synthesis of capsule glucuronoxylomannan. This Cryptococcus neoformans var. neoformans serotype D (strain JEC21 / ATCC MYA-565) (Filobasidiella neoformans) protein is Alpha-1,3-mannosyltransferase CMT1.